The primary structure comprises 277 residues: SPX domain-containing protein 3 (277 aa).

One can recognise an SPX domain in the interval 1 to 152 (MKFGKRLKKQ…GRLLRLPFIE (152 aa)).

In Oryza sativa subsp. indica (Rice), this protein is SPX domain-containing protein 3 (SPX3).